Reading from the N-terminus, the 401-residue chain is Acetate kinase (401 aa).

Mg(2+) is bound at residue asparagine 7. An ATP-binding site is contributed by lysine 14. Residue arginine 91 participates in substrate binding. Aspartate 148 serves as the catalytic Proton donor/acceptor. ATP is bound by residues 208-212 (HLGNG), 283-285 (DFR), and 331-335 (GVGEN). Mg(2+) is bound at residue glutamate 384.

Belongs to the acetokinase family. Homodimer. The cofactor is Mg(2+). Mn(2+) serves as cofactor.

The protein localises to the cytoplasm. It catalyses the reaction acetate + ATP = acetyl phosphate + ADP. It functions in the pathway metabolic intermediate biosynthesis; acetyl-CoA biosynthesis; acetyl-CoA from acetate: step 1/2. Its function is as follows. Catalyzes the formation of acetyl phosphate from acetate and ATP. Can also catalyze the reverse reaction. The polypeptide is Acetate kinase (Helicobacter hepaticus (strain ATCC 51449 / 3B1)).